Here is a 532-residue protein sequence, read N- to C-terminus: ATP-dependent RNA helicase DBP3 (532 aa).

Residues 1–78 (MGKRDRTEDD…EVAEEKPKMT (78 aa)) form a disordered region. Residues 15-58 (KKVKLDKKDKKEKKEKKDKKDKKDKKDKKDKKDKKEKKEKKEKK) are compositionally biased toward basic residues. Positions 126–152 (MEFSHVTLDPRITKVLTKFPRPTPIQA) match the Q motif motif. The Helicase ATP-binding domain maps to 155-327 (WPYLLAGKDM…EGFMKTPTKV (173 aa)). 168–175 (AETGSGKT) serves as a coordination point for ATP. A DEAD box motif is present at residues 274 to 277 (DEAD). Residues 356-502 (RLLDLLRQYA…PVPDELLKFG (147 aa)) enclose the Helicase C-terminal domain.

This sequence belongs to the DEAD box helicase family. DDX5/DBP2 subfamily.

It is found in the nucleus. The protein resides in the nucleolus. It catalyses the reaction ATP + H2O = ADP + phosphate + H(+). ATP-dependent RNA helicase required for 60S ribosomal subunit synthesis. Involved in efficient pre-rRNA processing, predominantly at site A3, which is necessary for the normal formation of 25S and 5.8S rRNAs. The chain is ATP-dependent RNA helicase DBP3 (DBP3) from Yarrowia lipolytica (strain CLIB 122 / E 150) (Yeast).